The primary structure comprises 470 residues: Neuraminidase (470 aa).

Residues 1–6 (MNPNQK) lie on the Intravirion side of the membrane. A helical membrane pass occupies residues 7 to 27 (IITIGSASIVLTTIGLLLQIT). The tract at residues 11–33 (GSASIVLTTIGLLLQITSLCSIW) is involved in apical transport and lipid raft association. Residues 28 to 470 (SLCSIWFSHY…GALLPFDIDK (443 aa)) are Virion surface-facing. The tract at residues 36-88 (HYNQVTQPHEQACSNNTTNYYNETFVNVTNVQNNYTTIIEPSAPNVVHYSSGR) is hypervariable stalk region. N-linked (GlcNAc...) asparagine; by host glycans are attached at residues Asn-50, Asn-51, Asn-57, Asn-62, and Asn-69. Positions 90 to 470 (LCPVKGWAPL…GALLPFDIDK (381 aa)) are head of neuraminidase. Disulfide bonds link Cys-91/Cys-418, Cys-123/Cys-128, Cys-183/Cys-230, Cys-232/Cys-237, Cys-278/Cys-291, Cys-280/Cys-289, Cys-317/Cys-334, and Cys-422/Cys-447. Arg-117 is a binding site for substrate. A glycan (N-linked (GlcNAc...) asparagine; by host) is linked at Asn-145. The active-site Proton donor/acceptor is Asp-150. Arg-151 lines the substrate pocket. An N-linked (GlcNAc...) asparagine; by host glycan is attached at Asn-269. Position 276–277 (276–277 (EE)) interacts with substrate. A substrate-binding site is contributed by Arg-292. The Ca(2+) site is built by Asp-293, Gly-297, and Asp-323. Residue Arg-369 participates in substrate binding. A glycan (N-linked (GlcNAc...) asparagine; by host) is linked at Asn-399. Catalysis depends on Tyr-403, which acts as the Nucleophile. An N-linked (GlcNAc...) asparagine; by host glycan is attached at Asn-417.

This sequence belongs to the glycosyl hydrolase 34 family. As to quaternary structure, homotetramer. Ca(2+) serves as cofactor. Post-translationally, N-glycosylated.

The protein resides in the virion membrane. The protein localises to the host apical cell membrane. It catalyses the reaction Hydrolysis of alpha-(2-&gt;3)-, alpha-(2-&gt;6)-, alpha-(2-&gt;8)- glycosidic linkages of terminal sialic acid residues in oligosaccharides, glycoproteins, glycolipids, colominic acid and synthetic substrates.. Its activity is regulated as follows. Inhibited by the neuraminidase inhibitors zanamivir (Relenza) and oseltamivir (Tamiflu). These drugs interfere with the release of progeny virus from infected cells and are effective against all influenza strains. Resistance to neuraminidase inhibitors is quite rare. Its function is as follows. Catalyzes the removal of terminal sialic acid residues from viral and cellular glycoconjugates. Cleaves off the terminal sialic acids on the glycosylated HA during virus budding to facilitate virus release. Additionally helps virus spread through the circulation by further removing sialic acids from the cell surface. These cleavages prevent self-aggregation and ensure the efficient spread of the progeny virus from cell to cell. Otherwise, infection would be limited to one round of replication. Described as a receptor-destroying enzyme because it cleaves a terminal sialic acid from the cellular receptors. May facilitate viral invasion of the upper airways by cleaving the sialic acid moieties on the mucin of the airway epithelial cells. Likely to plays a role in the budding process through its association with lipid rafts during intracellular transport. May additionally display a raft-association independent effect on budding. Plays a role in the determination of host range restriction on replication and virulence. Sialidase activity in late endosome/lysosome traffic seems to enhance virus replication. This chain is Neuraminidase, found in Influenza A virus (strain A/Turkey/Ontario/6118/1968 H8N4).